Here is a 424-residue protein sequence, read N- to C-terminus: FeMo cofactor biosynthesis protein NifB (424 aa).

A Radical SAM core domain is found at 12–261; it reads NDSSRHTYGR…PQMKHCARCR (250 aa). [4Fe-4S] cluster-binding residues include Cys-30, Cys-34, and Cys-37. S-adenosyl-L-methionine is bound by residues Gly-84, Thr-136, and Val-188. Positions 257 and 260 each coordinate [4Fe-4S] cluster.

It belongs to the radical SAM superfamily. NifB family. As to quaternary structure, monomer. Requires [4Fe-4S] cluster as cofactor.

Its pathway is cofactor biosynthesis; Fe-Mo cofactor biosynthesis. In terms of biological role, involved in the biosynthesis of the iron-molybdenum cofactor (FeMo-co or M-cluster) found in the dinitrogenase enzyme of the nitrogenase complex in nitrogen-fixing microorganisms. NifB catalyzes the crucial step of radical SAM-dependent carbide insertion that occurs concomitant with the insertion of a 9th sulfur and the rearrangement/coupling of two [4Fe-4S] clusters into a [8Fe-9S-C] cluster, the precursor to the M-cluster. The sequence is that of FeMo cofactor biosynthesis protein NifB from Chlorobaculum tepidum (strain ATCC 49652 / DSM 12025 / NBRC 103806 / TLS) (Chlorobium tepidum).